A 317-amino-acid chain; its full sequence is Acetyl-coenzyme A carboxylase carboxyl transferase subunit alpha (317 aa).

A CoA carboxyltransferase C-terminal domain is found at 37-292 (EINKKLEQTK…ADYITKGYNE (256 aa)).

The protein belongs to the AccA family. In terms of assembly, acetyl-CoA carboxylase is a heterohexamer composed of biotin carboxyl carrier protein (AccB), biotin carboxylase (AccC) and two subunits each of ACCase subunit alpha (AccA) and ACCase subunit beta (AccD).

It is found in the cytoplasm. It carries out the reaction N(6)-carboxybiotinyl-L-lysyl-[protein] + acetyl-CoA = N(6)-biotinyl-L-lysyl-[protein] + malonyl-CoA. It participates in lipid metabolism; malonyl-CoA biosynthesis; malonyl-CoA from acetyl-CoA: step 1/1. In terms of biological role, component of the acetyl coenzyme A carboxylase (ACC) complex. First, biotin carboxylase catalyzes the carboxylation of biotin on its carrier protein (BCCP) and then the CO(2) group is transferred by the carboxyltransferase to acetyl-CoA to form malonyl-CoA. This is Acetyl-coenzyme A carboxylase carboxyl transferase subunit alpha from Flavobacterium johnsoniae (strain ATCC 17061 / DSM 2064 / JCM 8514 / BCRC 14874 / CCUG 350202 / NBRC 14942 / NCIMB 11054 / UW101) (Cytophaga johnsonae).